A 398-amino-acid chain; its full sequence is Phosphoglycerate kinase (398 aa).

Residues 21–23 (DFN), Arg-36, 59–62 (HFGR), Arg-117, and Arg-150 each bind substrate. Residues Lys-200, Glu-321, and 351–354 (GGDS) contribute to the ATP site.

Belongs to the phosphoglycerate kinase family. Monomer.

Its subcellular location is the cytoplasm. It carries out the reaction (2R)-3-phosphoglycerate + ATP = (2R)-3-phospho-glyceroyl phosphate + ADP. It functions in the pathway carbohydrate degradation; glycolysis; pyruvate from D-glyceraldehyde 3-phosphate: step 2/5. The chain is Phosphoglycerate kinase from Wolbachia sp. subsp. Drosophila simulans (strain wRi).